Consider the following 360-residue polypeptide: Phospho-N-acetylmuramoyl-pentapeptide-transferase (360 aa).

10 helical membrane-spanning segments follow: residues Ala-26 to Ala-46, Gly-70 to Trp-90, Ser-94 to Val-114, Trp-132 to Gly-152, Val-168 to Ser-188, Gly-199 to Thr-219, Leu-239 to Tyr-259, Val-263 to Leu-283, Leu-288 to Val-308, and Val-338 to Lys-358.

This sequence belongs to the glycosyltransferase 4 family. MraY subfamily. Requires Mg(2+) as cofactor.

It localises to the cell inner membrane. The enzyme catalyses UDP-N-acetyl-alpha-D-muramoyl-L-alanyl-gamma-D-glutamyl-meso-2,6-diaminopimeloyl-D-alanyl-D-alanine + di-trans,octa-cis-undecaprenyl phosphate = di-trans,octa-cis-undecaprenyl diphospho-N-acetyl-alpha-D-muramoyl-L-alanyl-D-glutamyl-meso-2,6-diaminopimeloyl-D-alanyl-D-alanine + UMP. It functions in the pathway cell wall biogenesis; peptidoglycan biosynthesis. In terms of biological role, catalyzes the initial step of the lipid cycle reactions in the biosynthesis of the cell wall peptidoglycan: transfers peptidoglycan precursor phospho-MurNAc-pentapeptide from UDP-MurNAc-pentapeptide onto the lipid carrier undecaprenyl phosphate, yielding undecaprenyl-pyrophosphoryl-MurNAc-pentapeptide, known as lipid I. The protein is Phospho-N-acetylmuramoyl-pentapeptide-transferase of Photobacterium profundum (strain SS9).